The chain runs to 312 residues: Dihydroorotate dehydrogenase B (NAD(+)), catalytic subunit (312 aa).

FMN contacts are provided by residues Ser-23 and 47–48 (KA). Residues Lys-47 and 71-75 (NAIGL) each bind substrate. Residues Asn-103 and Asn-131 each contribute to the FMN site. Position 131 (Asn-131) interacts with substrate. Cys-134 serves as the catalytic Nucleophile. Positions 171 and 197 each coordinate FMN. 198 to 199 (NT) is a binding site for substrate. FMN-binding positions include Gly-223, 249-250 (GG), and 271-272 (GT).

The protein belongs to the dihydroorotate dehydrogenase family. Type 1 subfamily. In terms of assembly, heterotetramer of 2 PyrK and 2 PyrD type B subunits. Requires FMN as cofactor.

Its subcellular location is the cytoplasm. The catalysed reaction is (S)-dihydroorotate + NAD(+) = orotate + NADH + H(+). The protein operates within pyrimidine metabolism; UMP biosynthesis via de novo pathway; orotate from (S)-dihydroorotate (NAD(+) route): step 1/1. Its function is as follows. Catalyzes the conversion of dihydroorotate to orotate with NAD(+) as electron acceptor. The chain is Dihydroorotate dehydrogenase B (NAD(+)), catalytic subunit (pyrDB) from Streptococcus pneumoniae serotype 4 (strain ATCC BAA-334 / TIGR4).